The primary structure comprises 136 residues: Histone H3.3 (136 aa).

The interval 1-43 (MARTKQTARKSTGGKAPRKQLATKAARKSAPSTGGVKKPHRYR) is disordered. Arg3 is modified (asymmetric dimethylarginine; by PRMT6). Residue Thr4 is modified to Phosphothreonine; by HASPIN and VRK1. Position 5 is an allysine; alternate (Lys5). Lys5 bears the N6,N6,N6-trimethyllysine; alternate mark. Residue Lys5 is modified to N6,N6-dimethyllysine; alternate. Lys5 carries the N6-(2-hydroxyisobutyryl)lysine; alternate modification. Lys5 is subject to N6-acetyllysine; alternate. Lys5 is modified (N6-methyllysine; alternate). Gln6 is subject to 5-glutamyl dopamine; alternate. The residue at position 6 (Gln6) is a 5-glutamyl serotonin; alternate. The residue at position 7 (Thr7) is a Phosphothreonine; by PKC. Residue Lys10 is modified to N6-(2-hydroxyisobutyryl)lysine; alternate. Lys10 carries the post-translational modification N6-lactoyllysine; alternate. N6-methylated lysine is present on Lys10. The residue at position 11 (Ser11) is an ADP-ribosylserine; alternate. The residue at position 11 (Ser11) is a Phosphoserine; alternate; by AURKB, AURKC, RPS6KA3, RPS6KA4 and RPS6KA5. Thr12 carries the phosphothreonine; by PKC modification. Position 15 is an N6-(2-hydroxyisobutyryl)lysine; alternate (Lys15). Lys15 carries the post-translational modification N6-lactoyllysine; alternate. At Lys15 the chain carries N6-acetyllysine. An N6-glutaryllysine; alternate modification is found at Lys15. Arg18 carries the post-translational modification Asymmetric dimethylarginine. Residues Lys19, Lys24, and Lys28 each carry the N6-(2-hydroxyisobutyryl)lysine; alternate modification. Residue Lys19 is modified to N6-acetyllysine; alternate. N6-lactoyllysine; alternate is present on residues Lys19, Lys24, and Lys28. 3 positions are modified to N6-glutaryllysine; alternate: Lys19, Lys24, and Lys28. An N6-butyryllysine; alternate mark is found at Lys19 and Lys24. At Lys19 the chain carries N6-methylated lysine; alternate. Residue Lys24 is modified to N6-acetyllysine. Position 28 is an N6-acetyllysine; alternate (Lys28). The residue at position 28 (Lys28) is an N6-methylated lysine; alternate. Ser29 carries the post-translational modification ADP-ribosylserine; alternate. A Phosphoserine; alternate; by AURKB, AURKC and RPS6KA5 modification is found at Ser29. Lys37 carries the post-translational modification N6-(2-hydroxyisobutyryl)lysine; alternate. Lys37 carries the post-translational modification N6-acetyllysine; alternate. The residue at position 37 (Lys37) is an N6-methylated lysine; alternate. Position 42 is a phosphotyrosine (Tyr42). Lys57 carries the post-translational modification N6-(2-hydroxyisobutyryl)lysine; alternate. An N6-lactoyllysine; alternate modification is found at Lys57. At Lys57 the chain carries N6-glutaryllysine; alternate. Residue Lys57 is modified to N6-succinyllysine; alternate. Ser58 is modified (phosphoserine). Residues Lys65 and Lys80 each carry the N6-(2-hydroxyisobutyryl)lysine; alternate modification. Residues Lys65 and Lys80 each carry the N6-methylated lysine modification. The residue at position 80 (Lys80) is an N6-lactoyllysine; alternate. Lys80 bears the N6-glutaryllysine; alternate mark. At Lys80 the chain carries N6-succinyllysine; alternate. A Phosphothreonine modification is found at Thr81. N6-acetyllysine; alternate is present on residues Lys116 and Lys123. Lys116 and Lys123 each carry N6-glutaryllysine; alternate. Lys123 bears the N6-(2-hydroxyisobutyryl)lysine; alternate mark. Lys123 bears the N6-methyllysine; alternate mark. An N6-succinyllysine; alternate modification is found at Lys123.

Belongs to the histone H3 family. As to quaternary structure, the nucleosome is a histone octamer containing two molecules each of H2A, H2B, H3 and H4 assembled in one H3-H4 heterotetramer and two H2A-H2B heterodimers. The octamer wraps approximately 147 bp of DNA. Interacts with zmynd11; when trimethylated at 'Lys-36' (H3.3K36me3). Post-translationally, acetylation is generally linked to gene activation. Acetylation on Lys-19 (H3K18ac) and Lys-24 (H3K24ac) favors methylation at Arg-18 (H3R17me). Acetylation at Lys-123 (H3K122ac) by EP300/p300 plays a central role in chromatin structure: localizes at the surface of the histone octamer and stimulates transcription, possibly by promoting nucleosome instability. In terms of processing, asymmetric dimethylation at Arg-18 (H3R17me2a) is linked to gene activation. Asymmetric dimethylation at Arg-3 (H3R2me2a) by prmt6 is linked to gene repression and is mutually exclusive with H3 Lys-5 methylation (H3K4me2 and H3K4me3). H3R2me2a is present at the 3' of genes regardless of their transcription state and is enriched on inactive promoters, while it is absent on active promoters. Specifically enriched in modifications associated with active chromatin such as methylation at Lys-5 (H3K4me), Lys-37 (H3K36me) and Lys-80 (H3K79me) are linked to gene activation. Methylation at Lys-5 (H3K4me) facilitates subsequent acetylation of H3 and H4. Methylation at Lys-80 (H3K79me) is associated with DNA double-strand break (DSB) responses and is a specific target for tp53bp1. Methylation at Lys-10 (H3K9me) and Lys-28 (H3K27me) are linked to gene repression. Methylation at Lys-10 (H3K9me) is a specific target for HP1 proteins (cbx1, cbx3 and cbx5) and prevents subsequent phosphorylation at Ser-11 (H3S10ph) and acetylation of H3 and H4. Methylation at Lys-5 (H3K4me) and Lys-80 (H3K79me) require preliminary monoubiquitination of H2B at 'Lys-120'. Post-translationally, phosphorylated at Thr-4 (H3T3ph) by VRK1. Phosphorylated at Thr-4 (H3T3ph) by HASPIN during prophase and dephosphorylated during anaphase. Phosphorylation at Ser-11 (H3S10ph) by aurkb is crucial for chromosome condensation and cell-cycle progression during mitosis and meiosis. In addition phosphorylation at Ser-11 (H3S10ph) by RPS6KA4 and RPS6KA5 is important during interphase because it enables the transcription of genes following external stimulation, like mitogens, stress, growth factors or UV irradiation and result in the activation of genes, such as c-fos and c-jun. Phosphorylation at Ser-11 (H3S10ph), which is linked to gene activation, prevents methylation at Lys-10 (H3K9me) but facilitates acetylation of H3 and H4. Phosphorylation at Ser-11 (H3S10ph) by aurkb mediates the dissociation of HP1 proteins (cbx1, cbx3 and cbx5) from heterochromatin. Phosphorylation at Ser-11 (H3S10ph) is also an essential regulatory mechanism for neoplastic cell transformation. Phosphorylated at Ser-29 (H3S28ph) by map3k20 isoform 1, rps6ka5 or aurkb during mitosis or upon ultraviolet B irradiation. Phosphorylation at Thr-7 (H3T6ph) by prkcb is a specific tag for epigenetic transcriptional activation that prevents demethylation of Lys-5 (H3K4me) by lsd1/kdm1a. At centromeres, specifically phosphorylated at Thr-12 (H3T11ph) from prophase to early anaphase, by DAPK3 and PKN1. Phosphorylation at Thr-12 (H3T11ph) by PKN1 or isoform M2 of PKM (PKM2) is a specific tag for epigenetic transcriptional activation that promotes demethylation of Lys-10 (H3K9me) by kdm4c/jmjd2c. Phosphorylation at Tyr-42 (H3Y41ph) by jak2 promotes exclusion of cbx5 (HP1 alpha) from chromatin. Phosphorylation on Ser-32 (H3S31ph) is specific to regions bordering centromeres in metaphase chromosomes. In terms of processing, monoubiquitinated by rag1 in lymphoid cells, monoubiquitination is required for V(D)J recombination. Lysine deamination at Lys-5 (H3K4all) to form allysine only takes place on H3K4me3 and results in gene repression. Post-translationally, butyrylation of histones marks active promoters and competes with histone acetylation. It is present during late spermatogenesis. In terms of processing, succinylation at Lys-80 (H3K79succ) by KAT2A takes place with a maximum frequency around the transcription start sites of genes. It gives a specific tag for epigenetic transcription activation. Desuccinylation at Lys-123 (H3K122succ) by SIRT7 in response to DNA damage promotes chromatin condensation and double-strand breaks (DSBs) repair. Serine ADP-ribosylation constitutes the primary form of ADP-ribosylation of proteins in response to DNA damage. Serine ADP-ribosylation at Ser-11 (H3S10ADPr) is mutually exclusive with phosphorylation at Ser-11 (H3S10ph) and impairs acetylation at Lys-10 (H3K9ac). Post-translationally, serotonylated by TGM2 at Gln-6 (H3Q5ser) during serotonergic neuron differentiation. H3Q5ser is associated with trimethylation of Lys-5 (H3K4me3) and enhances general transcription factor IID (TFIID) complex-binding to H3K4me3, thereby facilitating transcription. In terms of processing, dopaminylated by TGM2 at Gln-6 (H3Q5dop) in ventral tegmental area (VTA) neurons. H3Q5dop mediates neurotransmission-independent role of nuclear dopamine by regulating relapse-related transcriptional plasticity in the reward system. Lactylated in macrophages by EP300/P300 by using lactoyl-CoA directly derived from endogenous or exogenous lactate, leading to stimulates gene transcription.

It localises to the nucleus. The protein localises to the chromosome. Its function is as follows. Variant histone H3 which replaces conventional H3 in a wide range of nucleosomes in active genes. Constitutes the predominant form of histone H3 in non-dividing cells and is incorporated into chromatin independently of DNA synthesis. Deposited at sites of nucleosomal displacement throughout transcribed genes, suggesting that it represents an epigenetic imprint of transcriptionally active chromatin. Nucleosomes wrap and compact DNA into chromatin, limiting DNA accessibility to the cellular machineries which require DNA as a template. Histones thereby play a central role in transcription regulation, DNA repair, DNA replication and chromosomal stability. DNA accessibility is regulated via a complex set of post-translational modifications of histones, also called histone code, and nucleosome remodeling. In Danio rerio (Zebrafish), this protein is Histone H3.3 (h3f3a).